We begin with the raw amino-acid sequence, 492 residues long: Glutamyl-tRNA(Gln) amidotransferase subunit A (492 aa).

Catalysis depends on charge relay system residues lysine 78 and serine 158. Residue serine 182 is the Acyl-ester intermediate of the active site.

Belongs to the amidase family. GatA subfamily. In terms of assembly, heterotrimer of A, B and C subunits.

It carries out the reaction L-glutamyl-tRNA(Gln) + L-glutamine + ATP + H2O = L-glutaminyl-tRNA(Gln) + L-glutamate + ADP + phosphate + H(+). In terms of biological role, allows the formation of correctly charged Gln-tRNA(Gln) through the transamidation of misacylated Glu-tRNA(Gln) in organisms which lack glutaminyl-tRNA synthetase. The reaction takes place in the presence of glutamine and ATP through an activated gamma-phospho-Glu-tRNA(Gln). The chain is Glutamyl-tRNA(Gln) amidotransferase subunit A from Rhodopseudomonas palustris (strain BisB5).